The chain runs to 143 residues: Large ribosomal subunit protein uL15 (143 aa).

The disordered stretch occupies residues 1–51 (MRLNSIAPAPGSRPSAKRVGRGIGSGLGKTAGRGHKGQKARAGGYHKVGFE). Residues 21–31 (RGIGSGLGKTA) show a composition bias toward gly residues.

The protein belongs to the universal ribosomal protein uL15 family. As to quaternary structure, part of the 50S ribosomal subunit.

Binds to the 23S rRNA. This is Large ribosomal subunit protein uL15 from Thioalkalivibrio sulfidiphilus (strain HL-EbGR7).